The sequence spans 380 residues: Cytochrome b (380 aa).

4 consecutive transmembrane segments (helical) span residues 33 to 53 (LGSL…FLAM), 77 to 98 (WVIR…FLHI), 113 to 133 (WNIG…GYVL), and 178 to 198 (FFTF…LHLL). Residues histidine 83 and histidine 97 each contribute to the heme b site. 2 residues coordinate heme b: histidine 182 and histidine 196. A ubiquinone is bound at residue histidine 201. Helical transmembrane passes span 226–246 (TKDI…VLFS), 288–308 (LGGV…PMLH), 320–340 (LSQL…WIGG), and 347–367 (FITI…ILVP).

The protein belongs to the cytochrome b family. In terms of assembly, the cytochrome bc1 complex contains 11 subunits: 3 respiratory subunits (MT-CYB, CYC1 and UQCRFS1), 2 core proteins (UQCRC1 and UQCRC2) and 6 low-molecular weight proteins (UQCRH/QCR6, UQCRB/QCR7, UQCRQ/QCR8, UQCR10/QCR9, UQCR11/QCR10 and a cleavage product of UQCRFS1). This cytochrome bc1 complex then forms a dimer. Heme b serves as cofactor.

It localises to the mitochondrion inner membrane. Component of the ubiquinol-cytochrome c reductase complex (complex III or cytochrome b-c1 complex) that is part of the mitochondrial respiratory chain. The b-c1 complex mediates electron transfer from ubiquinol to cytochrome c. Contributes to the generation of a proton gradient across the mitochondrial membrane that is then used for ATP synthesis. The polypeptide is Cytochrome b (MT-CYB) (Nomascus leucogenys (Northern white-cheeked gibbon)).